The primary structure comprises 69 residues: Cytochrome b-c1 complex subunit 6 (69 aa).

Cystine bridges form between C17/C59 and C31/C45.

The protein belongs to the UQCRH/QCR6 family. As to quaternary structure, component of the ubiquinol-cytochrome c oxidoreductase (cytochrome b-c1 complex, complex III, CIII), a multisubunit enzyme composed of 3 respiratory subunits cytochrome b, cytochrome c1 and Rieske protein, 2 core protein subunits, and additional low-molecular weight protein subunits. The complex exists as an obligatory dimer and forms supercomplexes (SCs) in the inner mitochondrial membrane with cytochrome c oxidase (complex IV, CIV).

The protein localises to the mitochondrion inner membrane. Component of the ubiquinol-cytochrome c oxidoreductase, a multisubunit transmembrane complex that is part of the mitochondrial electron transport chain which drives oxidative phosphorylation. The respiratory chain contains 3 multisubunit complexes succinate dehydrogenase (complex II, CII), ubiquinol-cytochrome c oxidoreductase (cytochrome b-c1 complex, complex III, CIII) and cytochrome c oxidase (complex IV, CIV), that cooperate to transfer electrons derived from NADH and succinate to molecular oxygen, creating an electrochemical gradient over the inner membrane that drives transmembrane transport and the ATP synthase. The cytochrome b-c1 complex catalyzes electron transfer from ubiquinol to cytochrome c, linking this redox reaction to translocation of protons across the mitochondrial inner membrane, with protons being carried across the membrane as hydrogens on the quinol. In the process called Q cycle, 2 protons are consumed from the matrix, 4 protons are released into the intermembrane space and 2 electrons are passed to cytochrome c. This Solanum tuberosum (Potato) protein is Cytochrome b-c1 complex subunit 6.